Consider the following 144-residue polypeptide: RNA-binding protein 1 (144 aa).

One can recognise an RRM domain in the interval 11–84 (CKVYVGNLGS…TRIRVEMSSG (74 aa)). A disordered region spans residues 78 to 115 (RVEMSSGRSRDRRRGEGGSSGRSGSGRYRITPSARTTS).

Belongs to the splicing factor SR family. As to quaternary structure, interacts with x16 (via Arg/Ser-rich region). Extensively phosphorylated on serine residues in the RS domain. Post-translationally, the tandem heptapeptide repeats in the C-terminal domain (CTD) can be highly phosphorylated. The phosphorylation activates Pol II. Phosphorylation occurs at residues 'Ser-2', 'Ser-5' and 'Ser-7' of the heptapeptide repeat and is mediated by P-TEFb. Dephosphorylated by the INTAC complex when transcripts are unfavorably configured for transcriptional elongation, leading to premature transcription termination: dephosphorylation is mediated by the mts/PP2A component of the INTAC complex. In terms of tissue distribution, ubiquitous.

The protein resides in the nucleus. Functionally, contributes to the activation of female-specific DSX splicing in vivo by recognizing the RBP1 target sequences within the purine-rich polypyrimidine tract of the female-specific 3' splice site. The protein is RNA-binding protein 1 (Rbp1) of Drosophila melanogaster (Fruit fly).